A 1740-amino-acid polypeptide reads, in one-letter code: SH3 and multiple ankyrin repeat domains protein 3 (1740 aa).

Residues 1-75 form an intramolecular interaction with the ANK repeats region; the sequence is MDGPGASAVV…KFLDEERLLQ (75 aa). Residue Y122 is modified to Phosphotyrosine. ANK repeat units follow at residues 148–181, 182–214, 215–245, 249–278, 282–311, and 315–345; these read SGEC…FRTR, DGLT…YKDS, RGLT…QLGT, NGWQ…NMGA, SGNT…NKDV, and NSQT…DVVP. The disordered stretch occupies residues 354–466; the sequence is KRRRLAGPSG…PPPRGPKRKL (113 aa). Phosphoserine is present on residues S373, S375, S387, and S394. The segment covering 404-415 has biased composition (basic and acidic residues); it reads LQEEKDRDRDGE. The span at 444 to 460 shows a compositional bias: pro residues; that stretch reads APGPGPASPAPPAPPPR. An SH3 domain is found at 470-529; the sequence is VPGRKFIAVKAHSPQGEGEIPLHRGEAVKVLSIGEGGFWEGTVKGRTGWFPADCVEEVQM. Residue S482 is modified to Phosphoserine. Phosphotyrosine is present on Y555. One can recognise a PDZ domain in the interval 570–664; it reads VAILQKRDHE…RLVMKVVSVT (95 aa). A disordered region spans residues 664 to 687; it reads TRKPEEDSARRRAPPPPKRAPSTT. Positions 677 to 684 are required for interaction with ABI1; sequence PPPPKRAP. Residues S694, S781, S790, and S801 each carry the phosphoserine modification. Disordered stretches follow at residues 759–855, 868–1053, 1115–1199, 1211–1463, and 1476–1518; these read RQGL…RSSF, AGLY…QPSR, AARE…MILS, LIVV…GPAR, and GDPV…EPVG. A compositionally biased stretch (pro residues) spans 812 to 845; it reads IPPPPQTAPPPPPAPYYFDSGPPPTFSPPPPPPG. 2 positions are modified to phosphoserine: S891 and S898. A Phosphothreonine modification is found at T913. Phosphotyrosine is present on Y931. R966 carries the post-translational modification Asymmetric dimethylarginine. Over residues 1017–1027 the composition is skewed to basic and acidic residues; that stretch reads VKERRLEERRR. Over residues 1123–1132 the composition is skewed to polar residues; it reads SQTPSRSPTP. At T1131 the chain carries Phosphothreonine. S1135, S1160, S1164, and S1167 each carry phosphoserine. Positions 1175–1195 are enriched in basic and acidic residues; sequence ARREAEKPTREERKSPEDKKS. A Phosphothreonine modification is found at T1235. 2 stretches are compositionally biased toward pro residues: residues 1252–1262 and 1322–1334; these read MPSPRAQPPGS and TPPP…PTTV. S1254 carries the phosphoserine modification. A compositionally biased stretch (low complexity) spans 1335–1344; sequence PSPASGKPSS. A compositionally biased stretch (basic and acidic residues) spans 1361 to 1371; it reads ADTRSSSDPHL. A compositionally biased stretch (low complexity) spans 1372–1393; the sequence is ETTSTISTVSSMSTLSSESGEL. The SH3-binding motif lies at 1411 to 1417; sequence PPVPPKP. Phosphoserine is present on S1421. Residues 1495–1515 are a coiled coil; the sequence is ISELSSRLQQLNKDTRSLGEE. Over residues 1496-1506 the composition is skewed to polar residues; that stretch reads SELSSRLQQLN. A phosphoserine mark is found at S1511, S1522, S1530, and S1549. 2 disordered regions span residues 1556-1594 and 1637-1673; these read ISAQ…PASL and VRSV…QQKP. The span at 1637 to 1647 shows a compositional bias: low complexity; it reads VRSVSARSRSP. S1644, S1646, and S1648 each carry phosphoserine. Over residues 1648–1658 the composition is skewed to pro residues; it reads SPSPLPSPSPG. The segment covering 1659–1668 has biased composition (low complexity); it reads SGPSAGPRRP. The 64-residue stretch at 1677-1740 folds into the SAM domain; sequence WSKFDVGDWL…ERALRQLDGS (64 aa).

The protein belongs to the SHANK family. In terms of assembly, may homomultimerize via its SAM domain. Interacts with BAIAP2, DBNL and SLC17A7/VGLUT1. Interacts with DLGAP1/GKAP, GRM1/MGLUR1, GRM5/MGLUR5 and LZTS3 C-termini via its PDZ domain. Interacts with ABI1, HOMER1, HOMER2, HOMER3 and CTTN/cortactin SH3 domain. Is part of a complex with DLG4/PSD-95 and DLGAP1/GKAP. Interacts (via PDZ domain) with the GRIA1 subunit of the AMPA receptor (via PDZ-binding motif). Interacts with WASF1 and CYFIP2; the interactions mediate the association of SHANK3 with the WAVE1 complex. Interacts with ARPC2; the interaction probably mediates the association of SHANK3 with the Arp2/3 complex. Interacts (via ANK repeats) with SHARPIN and SPTAN1. Interacts (via PDZ domain) with ARHGAP44 (probably via PDZ-binding motif); the interaction takes place in dendritic spines and promotes GRIA1 exocytosis. Interacts with CAMK2A. Interacts with DIP2A. Interacts with ADGRL3. Widely expressed in brain (at protein level).

It is found in the cytoplasm. It localises to the postsynaptic density. Its subcellular location is the cell projection. The protein localises to the dendritic spine. In terms of biological role, major scaffold postsynaptic density protein which interacts with multiple proteins and complexes to orchestrate the dendritic spine and synapse formation, maturation and maintenance. Interconnects receptors of the postsynaptic membrane including NMDA-type and metabotropic glutamate receptors via complexes with GKAP/PSD-95 and HOMER, respectively, and the actin-based cytoskeleton. Plays a role in the structural and functional organization of the dendritic spine and synaptic junction through the interaction with Arp2/3 and WAVE1 complex as well as the promotion of the F-actin clusters. By way of this control of actin dynamics, participates in the regulation of developing neurons growth cone motility and the NMDA receptor-signaling. Also modulates GRIA1 exocytosis and GRM5/MGLUR5 expression and signaling to control the AMPA and metabotropic glutamate receptor-mediated synaptic transmission and plasticity. May be required at an early stage of synapse formation and be inhibited by IGF1 to promote synapse maturation. This Rattus norvegicus (Rat) protein is SH3 and multiple ankyrin repeat domains protein 3 (Shank3).